Reading from the N-terminus, the 251-residue chain is Pyrroloquinoline-quinone synthase (251 aa).

It belongs to the PqqC family.

The catalysed reaction is 6-(2-amino-2-carboxyethyl)-7,8-dioxo-1,2,3,4,7,8-hexahydroquinoline-2,4-dicarboxylate + 3 O2 = pyrroloquinoline quinone + 2 H2O2 + 2 H2O + H(+). Its pathway is cofactor biosynthesis; pyrroloquinoline quinone biosynthesis. Ring cyclization and eight-electron oxidation of 3a-(2-amino-2-carboxyethyl)-4,5-dioxo-4,5,6,7,8,9-hexahydroquinoline-7,9-dicarboxylic-acid to PQQ. The polypeptide is Pyrroloquinoline-quinone synthase (Pseudomonas putida (strain ATCC 700007 / DSM 6899 / JCM 31910 / BCRC 17059 / LMG 24140 / F1)).